Here is a 177-residue protein sequence, read N- to C-terminus: SAYSvFN domain-containing protein 1 (177 aa).

The Cytoplasmic segment spans residues 1 to 100 (MADFQEQLRQ…CLKYTLWTVY (100 aa)). The segment covering 57–70 (SENSQDEAVTSSES) has biased composition (polar residues). The tract at residues 57–85 (SENSQDEAVTSSESELVPEEQPTRSTDHH) is disordered. Residues 101-121 (LLFWITLYVIAIKLSFGLVFL) constitute an intramembrane region (helical). Topologically, residues 122-177 (MFSALFGIYFNTRTEPKKRNEMSAYSVFNKNCESIDGTLKAEQFEREIRYGSGSVR) are cytoplasmic.

It belongs to the SAYSD1 family.

Its subcellular location is the endoplasmic reticulum membrane. Ufmylation 'reader' component of a translocation-associated quality control pathway, a mechanism that takes place when a ribosome has stalled during translation, and which is required to degrade clogged substrates. Specifically recognizes and binds ufmylated ribosomes when a ribosome has stalled, promoting the transport of stalled nascent chain to lysosomes for degradation. This Drosophila melanogaster (Fruit fly) protein is SAYSvFN domain-containing protein 1.